The following is a 720-amino-acid chain: Photosystem I P700 chlorophyll a apoprotein A1 (720 aa).

The next 8 helical transmembrane spans lie at 62-85 (IFSAHFGQLAIIFIWLSGMYFHGA), 148-171 (LYCTAIGGLIFAALMLFAGWFHYH), 186-210 (LNHHLAGLLGLGSLSWAGHQVHVSL), 282-300 (IVHHHLAIAVIFLIAGHMY), 337-360 (WHAQLALNLAILGSLTIVVAHHMY), 376-402 (LSLFTHHMWIGGFVIIGAAAHAAIFLV), 424-446 (AIISHLNWTCIFLGFHSFGLYIH), and 522-540 (FLVHHIHAFTIHVTVLILL). Residues Cys564 and Cys573 each contribute to the [4Fe-4S] cluster site. The next 2 helical transmembrane spans lie at 580–601 (HVFLGLFWMYNAISVVIFHFSW) and 655–677 (LSAYGLFFLGAHFVWAFSLMFLF). His666 lines the chlorophyll a' pocket. The chlorophyll a site is built by Met674 and Tyr682. Trp683 contacts phylloquinone. A helical transmembrane segment spans residues 715–720 (AVGVAH).

It belongs to the PsaA/PsaB family. The PsaA/B heterodimer binds the P700 chlorophyll special pair and subsequent electron acceptors. PSI consists of a core antenna complex that captures photons, and an electron transfer chain that converts photonic excitation into a charge separation. The eukaryotic PSI reaction center is composed of at least 11 subunits. It depends on P700 is a chlorophyll a/chlorophyll a' dimer, A0 is one or more chlorophyll a, A1 is one or both phylloquinones and FX is a shared 4Fe-4S iron-sulfur center. as a cofactor.

The protein resides in the plastid. It localises to the chloroplast thylakoid membrane. It catalyses the reaction reduced [plastocyanin] + hnu + oxidized [2Fe-2S]-[ferredoxin] = oxidized [plastocyanin] + reduced [2Fe-2S]-[ferredoxin]. Its function is as follows. PsaA and PsaB bind P700, the primary electron donor of photosystem I (PSI), as well as the electron acceptors A0, A1 and FX. PSI is a plastocyanin-ferredoxin oxidoreductase, converting photonic excitation into a charge separation, which transfers an electron from the donor P700 chlorophyll pair to the spectroscopically characterized acceptors A0, A1, FX, FA and FB in turn. Oxidized P700 is reduced on the lumenal side of the thylakoid membrane by plastocyanin. The protein is Photosystem I P700 chlorophyll a apoprotein A1 of Ephedra tweediana (Vining horsetail).